The chain runs to 557 residues: Iron-sulfur cluster assembly SufBD family protein ABCI8, chloroplastic (557 aa).

A disordered region spans residues 1–47; that stretch reads MASLLANGISSFSPQPTSDSSKSPKGFHPKPESLKFPSPKSLNPTRP. The N-terminal 52 residues, 1 to 52, are a transit peptide targeting the chloroplast; it reads MASLLANGISSFSPQPTSDSSKSPKGFHPKPESLKFPSPKSLNPTRPIFKLR. Positions 10–24 are enriched in low complexity; sequence SSFSPQPTSDSSKSP.

Belongs to the iron-sulfur cluster assembly SufBD family.

It localises to the plastid. Its subcellular location is the chloroplast. In terms of biological role, involved in light signaling, probably by mediating the transport and correct distribution of protoporphyrin IX, a chlorophyll precursor, in response to far-red light. The sequence is that of Iron-sulfur cluster assembly SufBD family protein ABCI8, chloroplastic (ABCI8) from Arabidopsis thaliana (Mouse-ear cress).